The primary structure comprises 572 residues: Glypican-5 (572 aa).

An N-terminal signal peptide occupies residues 1 to 24 (MDAQTWPVGFRCLLLLALVGSARS). 2 N-linked (GlcNAc...) asparagine glycosylation sites follow: Asn120 and Asn237. Positions 355 to 375 (SPRCSFDQSKEKHGMKTTTRN) are disordered. O-linked (Xyl...) (glycosaminoglycan) serine glycans are attached at residues Ser441, Ser486, Ser495, Ser507, and Ser509. N-linked (GlcNAc...) asparagine glycosylation is present at Asn527.

Belongs to the glypican family. In adult, primarily expressed in the brain. Also detected in fetal brain, lung and liver.

It localises to the cell membrane. The protein localises to the secreted. Its subcellular location is the extracellular space. Its function is as follows. Cell surface proteoglycan that bears heparan sulfate. This chain is Glypican-5 (GPC5), found in Homo sapiens (Human).